Consider the following 312-residue polypeptide: MPIRIPDQLPAAEVLREENIFVMQESRATTQAIRPLKVIILNLMPKKIETETQFLRLLSNSPLQVDVELLRIDNRTSKNTPTEHLDTFYRQFEGIKNRNFDGLIITGAPLGLVQFEDVIYWEHLQTIMTWAKDHVTSSLYVCWAAQAGLKLLYDLPKRTRKEKLSGVYKHTNLEQHHPILRGFDDQFLAPHSHYADFSADYLNAHTDLDILATSKEAGVYLASTKDKRNVFVTGHPEYDSLTLHNEYLRDLGEGMEPIIPVNYYPDDNPDIPPKATWRSHGHLLFSNWLNYCVYQQTPYDLDHFSELNFTRD.

The active-site Acyl-thioester intermediate is the cysteine 142. Substrate-binding residues include lysine 163 and serine 192. Histidine 235 acts as the Proton acceptor in catalysis. The active site involves glutamate 237. Arginine 249 is a binding site for substrate.

The protein belongs to the MetA family.

It localises to the cytoplasm. It catalyses the reaction L-homoserine + succinyl-CoA = O-succinyl-L-homoserine + CoA. The protein operates within amino-acid biosynthesis; L-methionine biosynthesis via de novo pathway; O-succinyl-L-homoserine from L-homoserine: step 1/1. Transfers a succinyl group from succinyl-CoA to L-homoserine, forming succinyl-L-homoserine. The protein is Homoserine O-succinyltransferase of Aliivibrio salmonicida (strain LFI1238) (Vibrio salmonicida (strain LFI1238)).